Reading from the N-terminus, the 95-residue chain is Aspartyl/glutamyl-tRNA(Asn/Gln) amidotransferase subunit C (95 aa).

Belongs to the GatC family. As to quaternary structure, heterotrimer of A, B and C subunits.

It carries out the reaction L-glutamyl-tRNA(Gln) + L-glutamine + ATP + H2O = L-glutaminyl-tRNA(Gln) + L-glutamate + ADP + phosphate + H(+). It catalyses the reaction L-aspartyl-tRNA(Asn) + L-glutamine + ATP + H2O = L-asparaginyl-tRNA(Asn) + L-glutamate + ADP + phosphate + 2 H(+). In terms of biological role, allows the formation of correctly charged Asn-tRNA(Asn) or Gln-tRNA(Gln) through the transamidation of misacylated Asp-tRNA(Asn) or Glu-tRNA(Gln) in organisms which lack either or both of asparaginyl-tRNA or glutaminyl-tRNA synthetases. The reaction takes place in the presence of glutamine and ATP through an activated phospho-Asp-tRNA(Asn) or phospho-Glu-tRNA(Gln). This chain is Aspartyl/glutamyl-tRNA(Asn/Gln) amidotransferase subunit C, found in Dechloromonas aromatica (strain RCB).